The sequence spans 217 residues: Protein-L-isoaspartate O-methyltransferase (217 aa).

The active site involves S64.

Belongs to the methyltransferase superfamily. L-isoaspartyl/D-aspartyl protein methyltransferase family.

It is found in the cytoplasm. The catalysed reaction is [protein]-L-isoaspartate + S-adenosyl-L-methionine = [protein]-L-isoaspartate alpha-methyl ester + S-adenosyl-L-homocysteine. Catalyzes the methyl esterification of L-isoaspartyl residues in peptides and proteins that result from spontaneous decomposition of normal L-aspartyl and L-asparaginyl residues. It plays a role in the repair and/or degradation of damaged proteins. This is Protein-L-isoaspartate O-methyltransferase from Azorhizobium caulinodans (strain ATCC 43989 / DSM 5975 / JCM 20966 / LMG 6465 / NBRC 14845 / NCIMB 13405 / ORS 571).